The following is a 97-amino-acid chain: Citrate lyase acyl carrier protein 2 (97 aa).

An O-(phosphoribosyl dephospho-coenzyme A)serine modification is found at Ser-14.

The protein belongs to the CitD family. As to quaternary structure, oligomer with a subunit composition of (alpha,beta,gamma)6.

It localises to the cytoplasm. Covalent carrier of the coenzyme of citrate lyase. This chain is Citrate lyase acyl carrier protein 2, found in Salmonella paratyphi A (strain ATCC 9150 / SARB42).